The following is a 173-amino-acid chain: Crossover junction endodeoxyribonuclease RuvC (173 aa).

Active-site residues include Asp8, Glu67, and Asp139. Mg(2+) is bound by residues Asp8, Glu67, and Asp139.

It belongs to the RuvC family. In terms of assembly, homodimer which binds Holliday junction (HJ) DNA. The HJ becomes 2-fold symmetrical on binding to RuvC with unstacked arms; it has a different conformation from HJ DNA in complex with RuvA. In the full resolvosome a probable DNA-RuvA(4)-RuvB(12)-RuvC(2) complex forms which resolves the HJ. It depends on Mg(2+) as a cofactor.

The protein resides in the cytoplasm. The enzyme catalyses Endonucleolytic cleavage at a junction such as a reciprocal single-stranded crossover between two homologous DNA duplexes (Holliday junction).. Its function is as follows. The RuvA-RuvB-RuvC complex processes Holliday junction (HJ) DNA during genetic recombination and DNA repair. Endonuclease that resolves HJ intermediates. Cleaves cruciform DNA by making single-stranded nicks across the HJ at symmetrical positions within the homologous arms, yielding a 5'-phosphate and a 3'-hydroxyl group; requires a central core of homology in the junction. The consensus cleavage sequence is 5'-(A/T)TT(C/G)-3'. Cleavage occurs on the 3'-side of the TT dinucleotide at the point of strand exchange. HJ branch migration catalyzed by RuvA-RuvB allows RuvC to scan DNA until it finds its consensus sequence, where it cleaves and resolves the cruciform DNA. The sequence is that of Crossover junction endodeoxyribonuclease RuvC from Psychromonas ingrahamii (strain DSM 17664 / CCUG 51855 / 37).